The chain runs to 101 residues: Large ribosomal subunit protein uL23 (101 aa).

This sequence belongs to the universal ribosomal protein uL23 family. Part of the 50S ribosomal subunit. Contacts protein L29, and trigger factor when it is bound to the ribosome.

In terms of biological role, one of the early assembly proteins it binds 23S rRNA. One of the proteins that surrounds the polypeptide exit tunnel on the outside of the ribosome. Forms the main docking site for trigger factor binding to the ribosome. The polypeptide is Large ribosomal subunit protein uL23 (Mannheimia succiniciproducens (strain KCTC 0769BP / MBEL55E)).